The following is a 404-amino-acid chain: Cysteine desulfurase IscS (404 aa).

Residues A75 to T76, N155, Q183, and S203 to H205 contribute to the pyridoxal 5'-phosphate site. K206 is subject to N6-(pyridoxal phosphate)lysine. T243 provides a ligand contact to pyridoxal 5'-phosphate. Catalysis depends on C328, which acts as the Cysteine persulfide intermediate. C328 is a [2Fe-2S] cluster binding site.

The protein belongs to the class-V pyridoxal-phosphate-dependent aminotransferase family. NifS/IscS subfamily. Homodimer. Forms a heterotetramer with IscU, interacts with other sulfur acceptors. Requires pyridoxal 5'-phosphate as cofactor.

It is found in the cytoplasm. It catalyses the reaction (sulfur carrier)-H + L-cysteine = (sulfur carrier)-SH + L-alanine. It functions in the pathway cofactor biosynthesis; iron-sulfur cluster biosynthesis. In terms of biological role, master enzyme that delivers sulfur to a number of partners involved in Fe-S cluster assembly, tRNA modification or cofactor biosynthesis. Catalyzes the removal of elemental sulfur atoms from cysteine to produce alanine. Functions as a sulfur delivery protein for Fe-S cluster synthesis onto IscU, an Fe-S scaffold assembly protein, as well as other S acceptor proteins. In Pectobacterium atrosepticum (strain SCRI 1043 / ATCC BAA-672) (Erwinia carotovora subsp. atroseptica), this protein is Cysteine desulfurase IscS.